We begin with the raw amino-acid sequence, 75 residues long: ATP synthase subunit c (75 aa).

Transmembrane regions (helical) follow at residues 8–28 and 54–74; these read FLGI…VSNI and AALT…LIFV.

It belongs to the ATPase C chain family. As to quaternary structure, F-type ATPases have 2 components, F(1) - the catalytic core - and F(0) - the membrane proton channel. F(1) has five subunits: alpha(3), beta(3), gamma(1), delta(1), epsilon(1). F(0) has three main subunits: a(1), b(2) and c(10-14). The alpha and beta chains form an alternating ring which encloses part of the gamma chain. F(1) is attached to F(0) by a central stalk formed by the gamma and epsilon chains, while a peripheral stalk is formed by the delta and b chains.

The protein localises to the cell inner membrane. Functionally, f(1)F(0) ATP synthase produces ATP from ADP in the presence of a proton or sodium gradient. F-type ATPases consist of two structural domains, F(1) containing the extramembraneous catalytic core and F(0) containing the membrane proton channel, linked together by a central stalk and a peripheral stalk. During catalysis, ATP synthesis in the catalytic domain of F(1) is coupled via a rotary mechanism of the central stalk subunits to proton translocation. In terms of biological role, key component of the F(0) channel; it plays a direct role in translocation across the membrane. A homomeric c-ring of between 10-14 subunits forms the central stalk rotor element with the F(1) delta and epsilon subunits. This Neorickettsia sennetsu (strain ATCC VR-367 / Miyayama) (Ehrlichia sennetsu) protein is ATP synthase subunit c.